A 454-amino-acid polypeptide reads, in one-letter code: Tubulin beta-3 chain (454 aa).

Gln-11, Glu-75, Ser-144, Gly-148, Thr-149, Gly-150, Asn-210, and Asn-232 together coordinate GTP. Glu-75 is a binding site for Mg(2+). Residues 435–454 are disordered; it reads TADDEFDPEVNQEEVEGDCI.

Belongs to the tubulin family. In terms of assembly, dimer of alpha and beta chains. A typical microtubule is a hollow water-filled tube with an outer diameter of 25 nm and an inner diameter of 15 nM. Alpha-beta heterodimers associate head-to-tail to form protofilaments running lengthwise along the microtubule wall with the beta-tubulin subunit facing the microtubule plus end conferring a structural polarity. Microtubules usually have 13 protofilaments but different protofilament numbers can be found in some organisms and specialized cells. It depends on Mg(2+) as a cofactor.

It is found in the cytoplasm. Its subcellular location is the cytoskeleton. Its function is as follows. Tubulin is the major constituent of microtubules, a cylinder consisting of laterally associated linear protofilaments composed of alpha- and beta-tubulin heterodimers. Microtubules grow by the addition of GTP-tubulin dimers to the microtubule end, where a stabilizing cap forms. Below the cap, tubulin dimers are in GDP-bound state, owing to GTPase activity of alpha-tubulin. This Drosophila melanogaster (Fruit fly) protein is Tubulin beta-3 chain (betaTub60D).